The sequence spans 416 residues: Multifunctional CCA protein (416 aa).

G8 and R11 together coordinate ATP. CTP contacts are provided by G8 and R11. Positions 21 and 23 each coordinate Mg(2+). ATP contacts are provided by R91, R137, and R140. R91, R137, and R140 together coordinate CTP. The HD domain occupies 228–329; that stretch reads TGVHTLMVLA…VKIFDKADFW (102 aa).

The protein belongs to the tRNA nucleotidyltransferase/poly(A) polymerase family. Bacterial CCA-adding enzyme type 1 subfamily. Monomer. Can also form homodimers and oligomers. Requires Mg(2+) as cofactor. The cofactor is Ni(2+).

The catalysed reaction is a tRNA precursor + 2 CTP + ATP = a tRNA with a 3' CCA end + 3 diphosphate. The enzyme catalyses a tRNA with a 3' CCA end + 2 CTP + ATP = a tRNA with a 3' CCACCA end + 3 diphosphate. Functionally, catalyzes the addition and repair of the essential 3'-terminal CCA sequence in tRNAs without using a nucleic acid template. Adds these three nucleotides in the order of C, C, and A to the tRNA nucleotide-73, using CTP and ATP as substrates and producing inorganic pyrophosphate. tRNA 3'-terminal CCA addition is required both for tRNA processing and repair. Also involved in tRNA surveillance by mediating tandem CCA addition to generate a CCACCA at the 3' terminus of unstable tRNAs. While stable tRNAs receive only 3'-terminal CCA, unstable tRNAs are marked with CCACCA and rapidly degraded. This is Multifunctional CCA protein from Shewanella baltica (strain OS155 / ATCC BAA-1091).